Here is a 337-residue protein sequence, read N- to C-terminus: Glyceraldehyde-3-phosphate dehydrogenase 3, cytosolic (337 aa).

Residues methionine 1–asparagine 151 are binding to NAD. Residues arginine 13–isoleucine 14, aspartate 35, and arginine 82 contribute to the NAD(+) site. The interval alanine 152–lysine 337 is catalytic. Residues serine 153–threonine 155, threonine 184, threonine 213–glycine 214, and arginine 236 each bind D-glyceraldehyde 3-phosphate. Cysteine 154 functions as the Nucleophile in the catalytic mechanism. An NAD(+)-binding site is contributed by asparagine 318.

The protein belongs to the glyceraldehyde-3-phosphate dehydrogenase family. As to quaternary structure, homotetramer.

The protein localises to the cytoplasm. It catalyses the reaction D-glyceraldehyde 3-phosphate + phosphate + NAD(+) = (2R)-3-phospho-glyceroyl phosphate + NADH + H(+). It participates in carbohydrate degradation; glycolysis; pyruvate from D-glyceraldehyde 3-phosphate: step 1/5. In terms of biological role, key enzyme in glycolysis that catalyzes the first step of the pathway by converting D-glyceraldehyde 3-phosphate (G3P) into 3-phospho-D-glyceroyl phosphate. Essential for the maintenance of cellular ATP levels and carbohydrate metabolism. The sequence is that of Glyceraldehyde-3-phosphate dehydrogenase 3, cytosolic (GAPC3) from Zea mays (Maize).